A 545-amino-acid chain; its full sequence is MDTSKDLICIGFEGTAEKTGVGIITSNGEVLFNKTIIYTPPVQGIHPREAADHHAETFVKLLKEALTVVPIEKIDLVSFSLGPGLGPSLRVTATTARALSLSINKPIIGVNHCISHVEIGKLKTDALDPLTLYVSGGNTQVLAYTGKKYRVIGETLDIAIGNCLDQFARHCNMPHPGGVYVEKYAKNGNKFIKLPYTVKGMDISLSGLLTAAMKKYDSKERIEDVCYSLQENSFSMLTEITERALAHTNKAEVMLVGGVAANNRLKEMLDIMCIEQNVDFYVPEREFCGDNGAMIAWLGILQYLNGKRMDLNDTKPISNYRSDMVEVNWISENEFNNENIKSRIIPEHLIGKGAEADISKGIYLEFESITKERVKKGYRILELDELIRLRRTVKEARFLASIKELGIYAPSIFDIDKENKKITMSYIHGKIAKEKIEEGNLNFCEDLGKIIGKMHSGGIVHNDLTTSNFIVSDNTFVIDFGLGKYSDLVEDKAIDLIVLKKSIMSIHYDKFDSVWNKIIEGYKTYEMFESVLECMKEVEKRARYL.

The interval 1-329 (MDTSKDLICI…YRSDMVEVNW (329 aa)) is kae1. Fe cation contacts are provided by histidine 112, histidine 116, and tyrosine 133. Residues 133-137 (YVSGG), aspartate 165, glycine 178, glutamate 182, and asparagine 262 contribute to the L-threonylcarbamoyladenylate site. A Fe cation-binding site is contributed by aspartate 290. Residues 344-545 (IIPEHLIGKG…KEVEKRARYL (202 aa)) enclose the Protein kinase domain. ATP-binding positions include 350–358 (IGKGAEADI) and lysine 371. Catalysis depends on aspartate 463, which acts as the Proton acceptor; for kinase activity.

In the N-terminal section; belongs to the KAE1 / TsaD family. It in the C-terminal section; belongs to the protein kinase superfamily. Tyr protein kinase family. BUD32 subfamily. In terms of assembly, component of the KEOPS complex that consists of Kae1, Bud32, Cgi121 and Pcc1; the whole complex dimerizes. Fe(2+) is required as a cofactor.

It localises to the cytoplasm. The enzyme catalyses L-seryl-[protein] + ATP = O-phospho-L-seryl-[protein] + ADP + H(+). The catalysed reaction is L-threonyl-[protein] + ATP = O-phospho-L-threonyl-[protein] + ADP + H(+). It catalyses the reaction L-threonylcarbamoyladenylate + adenosine(37) in tRNA = N(6)-L-threonylcarbamoyladenosine(37) in tRNA + AMP + H(+). Functionally, required for the formation of a threonylcarbamoyl group on adenosine at position 37 (t(6)A37) in tRNAs that read codons beginning with adenine. Is a component of the KEOPS complex that is probably involved in the transfer of the threonylcarbamoyl moiety of threonylcarbamoyl-AMP (TC-AMP) to the N6 group of A37. The Kae1 domain likely plays a direct catalytic role in this reaction. The Bud32 domain probably displays kinase activity that regulates Kae1 function. This Methanococcus maripaludis (strain C5 / ATCC BAA-1333) protein is Probable bifunctional tRNA threonylcarbamoyladenosine biosynthesis protein.